Here is a 172-residue protein sequence, read N- to C-terminus: RNA silencing suppressor p19 (172 aa).

Positions Glu-153 to Glu-172 are disordered.

Belongs to the tombusvirus protein p19 family. Homodimer.

Its function is as follows. Viral suppressor of RNA silencing which binds specifically to silencing RNAs (siRNAs). Acts as a molecular caliper to specifically select siRNAs based on the length of the duplex region of the RNA. The chain is RNA silencing suppressor p19 from Pear latent virus (PeLV).